Consider the following 314-residue polypeptide: 4-hydroxy-3-methylbut-2-enyl diphosphate reductase (314 aa).

C12 is a [4Fe-4S] cluster binding site. (2E)-4-hydroxy-3-methylbut-2-enyl diphosphate is bound by residues H41 and H74. Dimethylallyl diphosphate is bound by residues H41 and H74. 2 residues coordinate isopentenyl diphosphate: H41 and H74. Residue C96 coordinates [4Fe-4S] cluster. H124 contacts (2E)-4-hydroxy-3-methylbut-2-enyl diphosphate. Residue H124 participates in dimethylallyl diphosphate binding. H124 contacts isopentenyl diphosphate. E126 acts as the Proton donor in catalysis. (2E)-4-hydroxy-3-methylbut-2-enyl diphosphate is bound at residue T168. A [4Fe-4S] cluster-binding site is contributed by C198. (2E)-4-hydroxy-3-methylbut-2-enyl diphosphate-binding residues include S226, S227, N228, and S270. S226, S227, N228, and S270 together coordinate dimethylallyl diphosphate. Residues S226, S227, N228, and S270 each coordinate isopentenyl diphosphate.

Belongs to the IspH family. It depends on [4Fe-4S] cluster as a cofactor.

It catalyses the reaction isopentenyl diphosphate + 2 oxidized [2Fe-2S]-[ferredoxin] + H2O = (2E)-4-hydroxy-3-methylbut-2-enyl diphosphate + 2 reduced [2Fe-2S]-[ferredoxin] + 2 H(+). The catalysed reaction is dimethylallyl diphosphate + 2 oxidized [2Fe-2S]-[ferredoxin] + H2O = (2E)-4-hydroxy-3-methylbut-2-enyl diphosphate + 2 reduced [2Fe-2S]-[ferredoxin] + 2 H(+). It functions in the pathway isoprenoid biosynthesis; dimethylallyl diphosphate biosynthesis; dimethylallyl diphosphate from (2E)-4-hydroxy-3-methylbutenyl diphosphate: step 1/1. The protein operates within isoprenoid biosynthesis; isopentenyl diphosphate biosynthesis via DXP pathway; isopentenyl diphosphate from 1-deoxy-D-xylulose 5-phosphate: step 6/6. Catalyzes the conversion of 1-hydroxy-2-methyl-2-(E)-butenyl 4-diphosphate (HMBPP) into a mixture of isopentenyl diphosphate (IPP) and dimethylallyl diphosphate (DMAPP). Acts in the terminal step of the DOXP/MEP pathway for isoprenoid precursor biosynthesis. This chain is 4-hydroxy-3-methylbut-2-enyl diphosphate reductase, found in Pseudomonas fluorescens (strain Pf0-1).